The primary structure comprises 72 residues: UPF0270 protein YheU (72 aa).

The protein belongs to the UPF0270 family.

The chain is UPF0270 protein YheU from Salmonella arizonae (strain ATCC BAA-731 / CDC346-86 / RSK2980).